Here is a 902-residue protein sequence, read N- to C-terminus: Glycogen phosphorylase (902 aa).

Residues 1–21 (MPPASTSTTNDMITEEPTSPH) form a disordered region. Threonine 31 is modified (phosphothreonine). Serine 333 is modified (phosphoserine). Lysine 751 is modified (N6-(pyridoxal phosphate)lysine).

The protein belongs to the glycogen phosphorylase family. Homodimer. It depends on pyridoxal 5'-phosphate as a cofactor.

The protein localises to the cytoplasm. The protein resides in the cytosol. The enzyme catalyses [(1-&gt;4)-alpha-D-glucosyl](n) + phosphate = [(1-&gt;4)-alpha-D-glucosyl](n-1) + alpha-D-glucose 1-phosphate. With respect to regulation, activated by phosphorylation of Thr-31. Its function is as follows. Phosphorylase is an important allosteric enzyme in carbohydrate metabolism. Enzymes from different sources differ in their regulatory mechanisms and in their natural substrates. However, all known phosphorylases share catalytic and structural properties. The sequence is that of Glycogen phosphorylase (GPH1) from Saccharomyces cerevisiae (strain ATCC 204508 / S288c) (Baker's yeast).